A 188-amino-acid polypeptide reads, in one-letter code: Elongation factor P (188 aa).

The protein belongs to the elongation factor P family.

The protein resides in the cytoplasm. The protein operates within protein biosynthesis; polypeptide chain elongation. Functionally, involved in peptide bond synthesis. Stimulates efficient translation and peptide-bond synthesis on native or reconstituted 70S ribosomes in vitro. Probably functions indirectly by altering the affinity of the ribosome for aminoacyl-tRNA, thus increasing their reactivity as acceptors for peptidyl transferase. The sequence is that of Elongation factor P from Rickettsia massiliae (strain Mtu5).